The following is a 742-amino-acid chain: Ion-translocating oxidoreductase complex subunit C (742 aa).

4Fe-4S ferredoxin-type domains follow at residues 369 to 397 (GEPQ…QQLY) and 407 to 436 (KATT…VQYF). Residues Cys377, Cys380, Cys383, Cys387, Cys416, Cys419, Cys422, and Cys426 each contribute to the [4Fe-4S] cluster site. The interval 602 to 719 (KLEQQQANAE…PEEQVDPRKA (118 aa)) is disordered.

It belongs to the 4Fe4S bacterial-type ferredoxin family. RnfC subfamily. In terms of assembly, the complex is composed of six subunits: RsxA, RsxB, RsxC, RsxD, RsxE and RsxG. Requires [4Fe-4S] cluster as cofactor.

The protein resides in the cell inner membrane. Its function is as follows. Part of a membrane-bound complex that couples electron transfer with translocation of ions across the membrane. Required to maintain the reduced state of SoxR. The polypeptide is Ion-translocating oxidoreductase complex subunit C (Escherichia coli O6:H1 (strain CFT073 / ATCC 700928 / UPEC)).